The sequence spans 146 residues: Hemoglobin subunit beta (146 aa).

Position 1 is an N-acetylvaline (V1). Residues 2-146 form the Globin domain; sequence HLTGEEKAAV…VANALAHKYH (145 aa). Phosphothreonine is present on T12. At S44 the chain carries Phosphoserine. K59 carries the N6-acetyllysine modification. Position 63 (H63) interacts with heme b. K82 carries the N6-acetyllysine modification. H92 contacts heme b. An S-nitrosocysteine modification is found at C93. K144 carries the post-translational modification N6-acetyllysine.

It belongs to the globin family. As to quaternary structure, heterotetramer of two alpha chains and two beta chains. As to expression, red blood cells.

Involved in oxygen transport from the lung to the various peripheral tissues. This Martes foina (Beech marten) protein is Hemoglobin subunit beta (HBB).